The following is a 233-amino-acid chain: Ribosomal RNA large subunit methyltransferase E (233 aa).

5 residues coordinate S-adenosyl-L-methionine: G80, W82, D108, D124, and D148. K188 functions as the Proton acceptor in the catalytic mechanism.

The protein belongs to the class I-like SAM-binding methyltransferase superfamily. RNA methyltransferase RlmE family.

The protein localises to the cytoplasm. It carries out the reaction uridine(2552) in 23S rRNA + S-adenosyl-L-methionine = 2'-O-methyluridine(2552) in 23S rRNA + S-adenosyl-L-homocysteine + H(+). Its function is as follows. Specifically methylates the uridine in position 2552 of 23S rRNA at the 2'-O position of the ribose in the fully assembled 50S ribosomal subunit. This chain is Ribosomal RNA large subunit methyltransferase E, found in Ruegeria pomeroyi (strain ATCC 700808 / DSM 15171 / DSS-3) (Silicibacter pomeroyi).